Consider the following 72-residue polypeptide: Protein kish-A (72 aa).

The first 26 residues, 1-26 (MSAIFNFQSLLTVILLLICTCAYIRS), serve as a signal peptide directing secretion. Over 27–53 (LAPSLLDKNKTGLLGIFWKCARIGERK) the chain is Extracellular. A glycan (N-linked (GlcNAc...) asparagine) is linked at Asn35. Residues 54–71 (SPYVAVCCVVMAFSILFV) traverse the membrane as a helical segment. Position 72 (Gln72) is a topological domain, cytoplasmic.

This sequence belongs to the KISH family.

It is found in the golgi apparatus membrane. Involved in the early part of the secretory pathway. This Gallus gallus (Chicken) protein is Protein kish-A (TMEM167A).